We begin with the raw amino-acid sequence, 188 residues long: Xanthine phosphoribosyltransferase (188 aa).

Residues L20 and N27 each contribute to the xanthine site. 5-phospho-alpha-D-ribose 1-diphosphate is bound at residue 127–131 (AHGEA). Xanthine is bound at residue K155.

The protein belongs to the purine/pyrimidine phosphoribosyltransferase family. Xpt subfamily. In terms of assembly, homodimer.

The protein localises to the cytoplasm. The enzyme catalyses XMP + diphosphate = xanthine + 5-phospho-alpha-D-ribose 1-diphosphate. The protein operates within purine metabolism; XMP biosynthesis via salvage pathway; XMP from xanthine: step 1/1. In terms of biological role, converts the preformed base xanthine, a product of nucleic acid breakdown, to xanthosine 5'-monophosphate (XMP), so it can be reused for RNA or DNA synthesis. This Heliobacterium modesticaldum (strain ATCC 51547 / Ice1) protein is Xanthine phosphoribosyltransferase.